The chain runs to 291 residues: Acetylglutamate kinase (291 aa).

Residues 61 to 62 (GG), Arg-83, and Asn-187 each bind substrate.

It belongs to the acetylglutamate kinase family. ArgB subfamily.

Its subcellular location is the cytoplasm. The catalysed reaction is N-acetyl-L-glutamate + ATP = N-acetyl-L-glutamyl 5-phosphate + ADP. Its pathway is amino-acid biosynthesis; L-arginine biosynthesis; N(2)-acetyl-L-ornithine from L-glutamate: step 2/4. Functionally, catalyzes the ATP-dependent phosphorylation of N-acetyl-L-glutamate. The polypeptide is Acetylglutamate kinase (Methanoregula boonei (strain DSM 21154 / JCM 14090 / 6A8)).